We begin with the raw amino-acid sequence, 128 residues long: Prokineticin-2 (128 aa).

The first 27 residues, 1 to 27 (MRSSRCARLLLLLLLPPLLLTPPAGDA), serve as a signal peptide directing secretion. Disulfide bonds link cysteine 34/cysteine 46, cysteine 40/cysteine 58, cysteine 45/cysteine 106, cysteine 68/cysteine 114, and cysteine 108/cysteine 124. The tract at residues 71–95 (MTRKNHFGNGRQERRKRKRRRKKKV) is disordered. Positions 83–95 (ERRKRKRRRKKKV) are enriched in basic residues.

Belongs to the AVIT (prokineticin) family.

Its subcellular location is the secreted. In terms of biological role, may function as an output molecule from the suprachiasmatic nucleus (SCN) that transmits behavioral circadian rhythm. May also function locally within the SCN to synchronize output. Potently contracts gastrointestinal (GI) smooth muscle. This chain is Prokineticin-2 (PROK2), found in Bos taurus (Bovine).